A 200-amino-acid chain; its full sequence is Glycerol-3-phosphate acyltransferase (200 aa).

The next 5 helical transmembrane spans lie at Y3–A23, F50–V70, I75–L95, V109–V129, and Y134–G154.

This sequence belongs to the PlsY family. Probably interacts with PlsX.

The protein resides in the cell inner membrane. The enzyme catalyses an acyl phosphate + sn-glycerol 3-phosphate = a 1-acyl-sn-glycero-3-phosphate + phosphate. It functions in the pathway lipid metabolism; phospholipid metabolism. Its function is as follows. Catalyzes the transfer of an acyl group from acyl-phosphate (acyl-PO(4)) to glycerol-3-phosphate (G3P) to form lysophosphatidic acid (LPA). This enzyme utilizes acyl-phosphate as fatty acyl donor, but not acyl-CoA or acyl-ACP. This chain is Glycerol-3-phosphate acyltransferase, found in Thermosipho melanesiensis (strain DSM 12029 / CIP 104789 / BI429).